The sequence spans 249 residues: Probable phosphoglycerate mutase (249 aa).

Substrate contacts are provided by residues 9–16 (RHGESTWN), 22–23 (TG), arginine 61, 88–91 (ERMY), lysine 99, 115–116 (RR), and 184–185 (GN). Histidine 10 (tele-phosphohistidine intermediate) is an active-site residue. Catalysis depends on glutamate 88, which acts as the Proton donor/acceptor.

Belongs to the phosphoglycerate mutase family. BPG-dependent PGAM subfamily. In terms of assembly, homodimer.

The enzyme catalyses (2R)-2-phosphoglycerate = (2R)-3-phosphoglycerate. It catalyses the reaction (2R)-3-phospho-glyceroyl phosphate = (2R)-2,3-bisphosphoglycerate + H(+). Its function is as follows. Catalyzes the interconversion of 2-phosphoglycerate and 3-phosphoglycerate. This is Probable phosphoglycerate mutase (gpmA) from Dictyostelium discoideum (Social amoeba).